The following is a 189-amino-acid chain: Putative manganese efflux pump MntP (189 aa).

Helical transmembrane passes span 2-22 (SLTELILLAIGLSMDASAVSI), 36-56 (ILQMAVMFAVFQGIMPLIGYY), 71-91 (WIAFILLVIIGGKMIHESITA), 106-126 (LLLVQAVATSIDALAVGVSLS), 132-152 (ILYSITIIGIVTFICCTAAIL), and 167-187 (IVGGLILVGIGVKIFVQHMFF).

It belongs to the MntP (TC 9.B.29) family.

It is found in the cell membrane. Probably functions as a manganese efflux pump. This Ruminiclostridium cellulolyticum (strain ATCC 35319 / DSM 5812 / JCM 6584 / H10) (Clostridium cellulolyticum) protein is Putative manganese efflux pump MntP.